A 191-amino-acid chain; its full sequence is Somatotropin (191 aa).

His-20 is a Zn(2+) binding site. The cysteines at positions 53 and 164 are disulfide-linked. Zn(2+) is bound at residue Glu-173. An intrachain disulfide couples Cys-181 to Cys-189.

It belongs to the somatotropin/prolactin family.

The protein localises to the secreted. Functionally, growth hormone plays an important role in growth control and is involved in the regulation of several anabolic processes. Implicated as an osmoregulatory substance important for seawater adaptation. The protein is Somatotropin (GH) of Chelonia mydas (Green sea-turtle).